The chain runs to 377 residues: DNA replication and repair protein RecF (377 aa).

30–37 is a binding site for ATP; the sequence is GPNGVGKT.

Belongs to the RecF family.

It localises to the cytoplasm. In terms of biological role, the RecF protein is involved in DNA metabolism; it is required for DNA replication and normal SOS inducibility. RecF binds preferentially to single-stranded, linear DNA. It also seems to bind ATP. The sequence is that of DNA replication and repair protein RecF from Salinispora tropica (strain ATCC BAA-916 / DSM 44818 / JCM 13857 / NBRC 105044 / CNB-440).